The sequence spans 652 residues: DNA ligase (652 aa).

NAD(+) is bound by residues 29–33 (DSEYD), 78–79 (SL), and E107. K109 serves as the catalytic N6-AMP-lysine intermediate. Residues R130, E164, K278, and K302 each coordinate NAD(+). Residues C395, C398, C413, and C418 each contribute to the Zn(2+) site. In terms of domain architecture, BRCT spans 577 to 652 (DQQAALFGLT…IEDEDWLLNL (76 aa)).

Belongs to the NAD-dependent DNA ligase family. LigA subfamily. Requires Mg(2+) as cofactor. Mn(2+) is required as a cofactor.

It catalyses the reaction NAD(+) + (deoxyribonucleotide)n-3'-hydroxyl + 5'-phospho-(deoxyribonucleotide)m = (deoxyribonucleotide)n+m + AMP + beta-nicotinamide D-nucleotide.. Functionally, DNA ligase that catalyzes the formation of phosphodiester linkages between 5'-phosphoryl and 3'-hydroxyl groups in double-stranded DNA using NAD as a coenzyme and as the energy source for the reaction. It is essential for DNA replication and repair of damaged DNA. This chain is DNA ligase, found in Streptococcus equi subsp. equi (strain 4047).